A 203-amino-acid chain; its full sequence is Pyridoxal 5'-phosphate synthase subunit PdxT (203 aa).

49–51 (GES) lines the L-glutamine pocket. Cys81 acts as the Nucleophile in catalysis. L-glutamine-binding positions include Arg110 and 139-140 (IR). Catalysis depends on charge relay system residues His175 and Glu177.

It belongs to the glutaminase PdxT/SNO family. As to quaternary structure, in the presence of PdxS, forms a dodecamer of heterodimers. Only shows activity in the heterodimer.

It carries out the reaction aldehydo-D-ribose 5-phosphate + D-glyceraldehyde 3-phosphate + L-glutamine = pyridoxal 5'-phosphate + L-glutamate + phosphate + 3 H2O + H(+). It catalyses the reaction L-glutamine + H2O = L-glutamate + NH4(+). It functions in the pathway cofactor biosynthesis; pyridoxal 5'-phosphate biosynthesis. Its function is as follows. Catalyzes the hydrolysis of glutamine to glutamate and ammonia as part of the biosynthesis of pyridoxal 5'-phosphate. The resulting ammonia molecule is channeled to the active site of PdxS. The sequence is that of Pyridoxal 5'-phosphate synthase subunit PdxT from Parafrankia sp. (strain EAN1pec).